A 134-amino-acid chain; its full sequence is Transcription antitermination protein NusB (134 aa).

It belongs to the NusB family.

Its function is as follows. Involved in transcription antitermination. Required for transcription of ribosomal RNA (rRNA) genes. Binds specifically to the boxA antiterminator sequence of the ribosomal RNA (rrn) operons. The sequence is that of Transcription antitermination protein NusB from Shewanella loihica (strain ATCC BAA-1088 / PV-4).